The sequence spans 464 residues: Cysteine--tRNA ligase (464 aa).

Residue cysteine 29 participates in Zn(2+) binding. A 'HIGH' region motif is present at residues 31-41; the sequence is ATVQGDPHIGH. Residues cysteine 207, histidine 232, and glutamate 236 each contribute to the Zn(2+) site. The 'KMSKS' region signature appears at 263-267; it reads KMSKS. Lysine 266 contributes to the ATP binding site.

This sequence belongs to the class-I aminoacyl-tRNA synthetase family. Monomer. Zn(2+) is required as a cofactor.

The protein resides in the cytoplasm. The catalysed reaction is tRNA(Cys) + L-cysteine + ATP = L-cysteinyl-tRNA(Cys) + AMP + diphosphate. This Rhodococcus opacus (strain B4) protein is Cysteine--tRNA ligase.